The following is a 141-amino-acid chain: Large ribosomal subunit protein uL11 (141 aa).

The protein belongs to the universal ribosomal protein uL11 family. As to quaternary structure, part of the ribosomal stalk of the 50S ribosomal subunit. Interacts with L10 and the large rRNA to form the base of the stalk. L10 forms an elongated spine to which L12 dimers bind in a sequential fashion forming a multimeric L10(L12)X complex. One or more lysine residues are methylated.

Functionally, forms part of the ribosomal stalk which helps the ribosome interact with GTP-bound translation factors. In Geobacillus thermodenitrificans (strain NG80-2), this protein is Large ribosomal subunit protein uL11.